A 132-amino-acid chain; its full sequence is MINDTIADMLTRIRNANLAKHQIVQVCSTKMTRNIIKVLQEEGFIYKFEEIGEDNNKYLLISLKYKGKRKKPVITSLKRISKPGLRVYANYKELPKVLGGIGIAIISTSKGVMSDYHARHYGLGGEILCYIW.

The protein belongs to the universal ribosomal protein uS8 family. As to quaternary structure, part of the 30S ribosomal subunit.

The protein localises to the plastid. It is found in the chloroplast. In terms of biological role, one of the primary rRNA binding proteins, it binds directly to 16S rRNA central domain where it helps coordinate assembly of the platform of the 30S subunit. In Gracilaria tenuistipitata var. liui (Red alga), this protein is Small ribosomal subunit protein uS8c (rps8).